Consider the following 236-residue polypeptide: Syntaxin-8 (236 aa).

The Cytoplasmic portion of the chain corresponds to 1-215 (MAPDPWFSTY…LVDRKSASCG (215 aa)). The stretch at 42-65 (LTIRTLLKNLKVKIDLLKDLLLRA) forms a coiled coil. Residues Ser102 and Ser160 each carry the phosphoserine modification. In terms of domain architecture, t-SNARE coiled-coil homology spans 145-207 (QKIIQEQDAG…RTEARRVTLV (63 aa)). The helical; Anchor for type IV membrane protein transmembrane segment at 216-232 (MIMVILLLLVAIVVVAV) threads the bilayer. The Vesicular portion of the chain corresponds to 233 to 236 (WPTN).

The protein belongs to the syntaxin family. Part of the SNARE core complex containing STX7, VAMP8 and VTI1B. Interacts with VAMP8. Forms a SNARE complex with STX7, VTI1B and VAMP8 which functions in the homotypic fusion of late endosomes. Component of the SNARE complex composed of STX7, STX8, VAMP7 and VTI1B that is required for heterotypic fusion of late endosomes with lysosomes. Interacts with HECTD3. Interacts with TPC1. Post-translationally, ubiquitinated by HECTD3. Widely expressed in all tissues examined.

It localises to the membrane. In terms of biological role, vesicle trafficking protein that functions in the early secretory pathway, possibly by mediating retrograde transport from cis-Golgi membranes to the ER. The polypeptide is Syntaxin-8 (Stx8) (Rattus norvegicus (Rat)).